The sequence spans 217 residues: 3,4-dihydroxy-2-butanone 4-phosphate synthase (217 aa).

D-ribulose 5-phosphate is bound by residues Arg37–Glu38, Asp42, Arg150–Thr154, and Glu174. Glu38 provides a ligand contact to Mg(2+). Residue His153 coordinates Mg(2+).

It belongs to the DHBP synthase family. In terms of assembly, homodimer. The cofactor is Mg(2+). Requires Mn(2+) as cofactor.

It carries out the reaction D-ribulose 5-phosphate = (2S)-2-hydroxy-3-oxobutyl phosphate + formate + H(+). The protein operates within cofactor biosynthesis; riboflavin biosynthesis; 2-hydroxy-3-oxobutyl phosphate from D-ribulose 5-phosphate: step 1/1. Functionally, catalyzes the conversion of D-ribulose 5-phosphate to formate and 3,4-dihydroxy-2-butanone 4-phosphate. The polypeptide is 3,4-dihydroxy-2-butanone 4-phosphate synthase (Pectobacterium atrosepticum (strain SCRI 1043 / ATCC BAA-672) (Erwinia carotovora subsp. atroseptica)).